The sequence spans 563 residues: Arginine--tRNA ligase (563 aa).

The 'HIGH' region signature appears at 121 to 131 (PNIAKPFSIGH).

The protein belongs to the class-I aminoacyl-tRNA synthetase family. As to quaternary structure, monomer.

It is found in the cytoplasm. The enzyme catalyses tRNA(Arg) + L-arginine + ATP = L-arginyl-tRNA(Arg) + AMP + diphosphate. The polypeptide is Arginine--tRNA ligase (Streptococcus pneumoniae (strain Hungary19A-6)).